The primary structure comprises 415 residues: Gamma-glutamyl phosphate reductase (415 aa).

It belongs to the gamma-glutamyl phosphate reductase family.

The protein resides in the cytoplasm. It catalyses the reaction L-glutamate 5-semialdehyde + phosphate + NADP(+) = L-glutamyl 5-phosphate + NADPH + H(+). It participates in amino-acid biosynthesis; L-proline biosynthesis; L-glutamate 5-semialdehyde from L-glutamate: step 2/2. Functionally, catalyzes the NADPH-dependent reduction of L-glutamate 5-phosphate into L-glutamate 5-semialdehyde and phosphate. The product spontaneously undergoes cyclization to form 1-pyrroline-5-carboxylate. This Listeria monocytogenes serotype 4a (strain HCC23) protein is Gamma-glutamyl phosphate reductase.